The sequence spans 645 residues: Chlorophyllide a oxygenase, chloroplastic (645 aa).

The disordered stretch occupies residues 1-46 (MLPASLQRKAAAVGGRGPTNQSRVAVRVSAQPKEAPPASTPIVEDP). A coiled-coil region spans residues 105-218 (QARQKLEYLR…RKASDLDIKE (114 aa)). A disordered region spans residues 258 to 287 (ATTVTQEVPSTSYGTPVDRAPRRSKAAIRR). Residues 259-271 (TTVTQEVPSTSYG) show a composition bias toward polar residues. Positions 305 to 406 (WYPAEFSARL…CAEKDGFIWV (102 aa)) constitute a Rieske domain. [2Fe-2S] cluster-binding residues include C346, H348, C365, and H368. 4 residues coordinate Fe cation: E446, D450, H453, and H458.

The protein localises to the plastid. The protein resides in the chloroplast inner membrane. Its subcellular location is the chloroplast thylakoid membrane. The enzyme catalyses chlorophyllide a + 2 NADPH + 2 O2 + 2 H(+) = chlorophyllide b + 2 NADP(+) + 3 H2O. In terms of biological role, catalyzes a two-step oxygenase reaction involved in the synthesis of chlorophyll b. Acts specifically on the non-esterified chlorophyllide a and not on chlorophyll a. The polypeptide is Chlorophyllide a oxygenase, chloroplastic (CAO) (Chlamydomonas reinhardtii (Chlamydomonas smithii)).